Reading from the N-terminus, the 516-residue chain is GMP synthase [glutamine-hydrolyzing] (516 aa).

One can recognise a Glutamine amidotransferase type-1 domain in the interval 5–199 (PIVILDFGSQ…ARKICGITSK (195 aa)). Residue Cys82 is the Nucleophile of the active site. Active-site residues include His173 and Glu175. A GMPS ATP-PPase domain is found at 200 to 391 (WDMGHFAKEQ…LGLPREMVYR (192 aa)). 227–233 (SGGVDSS) is an ATP binding site.

Homodimer.

It carries out the reaction XMP + L-glutamine + ATP + H2O = GMP + L-glutamate + AMP + diphosphate + 2 H(+). Its pathway is purine metabolism; GMP biosynthesis; GMP from XMP (L-Gln route): step 1/1. Its function is as follows. Catalyzes the synthesis of GMP from XMP. In Nitratiruptor sp. (strain SB155-2), this protein is GMP synthase [glutamine-hydrolyzing].